The chain runs to 173 residues: Invasion protein B homolog BruAb1_0366 (173 aa).

The N-terminal stretch at 1 to 23 (MKNYRAIGLAFTFTALSSLSAFA) is a signal peptide.

It belongs to the IalB family.

The chain is Invasion protein B homolog BruAb1_0366 from Brucella abortus biovar 1 (strain 9-941).